The following is a 101-amino-acid chain: Urease subunit beta (101 aa).

It belongs to the urease beta subunit family. As to quaternary structure, heterotrimer of UreA (gamma), UreB (beta) and UreC (alpha) subunits. Three heterotrimers associate to form the active enzyme.

It localises to the cytoplasm. It carries out the reaction urea + 2 H2O + H(+) = hydrogencarbonate + 2 NH4(+). It participates in nitrogen metabolism; urea degradation; CO(2) and NH(3) from urea (urease route): step 1/1. This chain is Urease subunit beta, found in Pseudomonas paraeruginosa (strain DSM 24068 / PA7) (Pseudomonas aeruginosa (strain PA7)).